A 407-amino-acid polypeptide reads, in one-letter code: Phosphopentomutase (407 aa).

Mn(2+) contacts are provided by Asp11, Asp305, His310, Asp346, His347, and His358.

Belongs to the phosphopentomutase family. Mn(2+) serves as cofactor.

Its subcellular location is the cytoplasm. It carries out the reaction 2-deoxy-alpha-D-ribose 1-phosphate = 2-deoxy-D-ribose 5-phosphate. The enzyme catalyses alpha-D-ribose 1-phosphate = D-ribose 5-phosphate. It functions in the pathway carbohydrate degradation; 2-deoxy-D-ribose 1-phosphate degradation; D-glyceraldehyde 3-phosphate and acetaldehyde from 2-deoxy-alpha-D-ribose 1-phosphate: step 1/2. Isomerase that catalyzes the conversion of deoxy-ribose 1-phosphate (dRib-1-P) and ribose 1-phosphate (Rib-1-P) to deoxy-ribose 5-phosphate (dRib-5-P) and ribose 5-phosphate (Rib-5-P), respectively. The chain is Phosphopentomutase from Legionella pneumophila (strain Corby).